The following is a 189-amino-acid chain: Cancer/testis antigen family 45 member A5 (189 aa).

Over residues 1-23 (MTDKTEKVAVDPETVFKRPRECD) the composition is skewed to basic and acidic residues. 2 disordered regions span residues 1-27 (MTDKTEKVAVDPETVFKRPRECDSPSY) and 82-118 (DGMMQKPGSNAPVGGNVTSSFSGDDLECRETASSPKS).

Belongs to the CT45 family. As to expression, testis specific. Expressed in cancer cell lines.

Its subcellular location is the nucleus. The polypeptide is Cancer/testis antigen family 45 member A5 (Homo sapiens (Human)).